The chain runs to 164 residues: Large ribosomal subunit protein uL10 (164 aa).

Belongs to the universal ribosomal protein uL10 family. Part of the ribosomal stalk of the 50S ribosomal subunit. The N-terminus interacts with L11 and the large rRNA to form the base of the stalk. The C-terminus forms an elongated spine to which L12 dimers bind in a sequential fashion forming a multimeric L10(L12)X complex.

Functionally, forms part of the ribosomal stalk, playing a central role in the interaction of the ribosome with GTP-bound translation factors. This chain is Large ribosomal subunit protein uL10 (rplJ), found in Helicobacter pylori (strain ATCC 700392 / 26695) (Campylobacter pylori).